A 414-amino-acid chain; its full sequence is 3-phosphoshikimate 1-carboxyvinyltransferase (414 aa).

Lys-20, Ser-21, and Arg-25 together coordinate 3-phosphoshikimate. Lys-20 is a binding site for phosphoenolpyruvate. Phosphoenolpyruvate contacts are provided by Gly-85 and Arg-113. 6 residues coordinate 3-phosphoshikimate: Ser-154, Ser-155, Gln-156, Ser-181, Asp-296, and Lys-323. Gln-156 contributes to the phosphoenolpyruvate binding site. The active-site Proton acceptor is the Asp-296. The phosphoenolpyruvate site is built by Arg-327, Arg-371, and Lys-395.

The protein belongs to the EPSP synthase family. As to quaternary structure, monomer.

The protein resides in the cytoplasm. The enzyme catalyses 3-phosphoshikimate + phosphoenolpyruvate = 5-O-(1-carboxyvinyl)-3-phosphoshikimate + phosphate. Its pathway is metabolic intermediate biosynthesis; chorismate biosynthesis. Catalyzes the transfer of the enolpyruvyl moiety of phosphoenolpyruvate (PEP) to the 5-hydroxyl of shikimate-3-phosphate (S3P) to produce enolpyruvyl shikimate-3-phosphate and inorganic phosphate. The protein is 3-phosphoshikimate 1-carboxyvinyltransferase of Saccharolobus islandicus (strain M.14.25 / Kamchatka #1) (Sulfolobus islandicus).